Consider the following 57-residue polypeptide: Potassium channel toxin alpha-KTx 17.2 (57 aa).

A signal peptide spans Met-1 to Arg-26. 3 disulfide bridges follow: Cys-30-Cys-46, Cys-36-Cys-51, and Cys-40-Cys-53.

The protein belongs to the short scorpion toxin superfamily. Potassium channel inhibitor family. Alpha-KTx 17 subfamily. In terms of tissue distribution, expressed by the venom gland.

The protein resides in the secreted. Its function is as follows. Inhibits voltage-gated potassium channels. The protein is Potassium channel toxin alpha-KTx 17.2 of Lychas mucronatus (Chinese swimming scorpion).